The primary structure comprises 203 residues: Urease accessory protein UreG (203 aa).

14 to 21 contacts GTP; the sequence is GPVGSGKT.

The protein belongs to the SIMIBI class G3E GTPase family. UreG subfamily. As to quaternary structure, homodimer. UreD, UreF and UreG form a complex that acts as a GTP-hydrolysis-dependent molecular chaperone, activating the urease apoprotein by helping to assemble the nickel containing metallocenter of UreC. The UreE protein probably delivers the nickel.

The protein localises to the cytoplasm. In terms of biological role, facilitates the functional incorporation of the urease nickel metallocenter. This process requires GTP hydrolysis, probably effectuated by UreG. This Allorhizobium ampelinum (strain ATCC BAA-846 / DSM 112012 / S4) (Agrobacterium vitis (strain S4)) protein is Urease accessory protein UreG.